The chain runs to 347 residues: MNPLIMSIILATIILGTTIVMTGSHWLMIWIGFEMNMLAIIPMLMKQHNPRSTEAATKYFFTQATASMLLMLAGIINLMYSGQWTGVKLVNPTASIIMTLALAMKLGLAPFHFWVPEVTQGIPLSSGLILLTWQKLASMTGLYMISPGINLNMLMTMSMLSIAIGGWGGLNQTQLRKIMAYSSIAHMGWMTAILIYNPTMTLLNLVIYILMTTTMFMLFMINSSTTTLSLSHTWNKMPLITTTTLVTLLSMGGLPPLMGFLPKWMIIQEMTKNNNIVLPTIMAITALLNLFFYMRLTYATSLTMFPTTNNMKIKWQFENPKYLSLLTPMIMMSTLTLPLAPMMMILN.

11 helical membrane passes run 3–23 (PLIMSIILATIILGTTIVMTG), 25–45 (HWLMIWIGFEMNMLAIIPMLM), 59–79 (YFFTQATASMLLMLAGIINLM), 96–116 (IIMTLALAMKLGLAPFHFWVP), 127–147 (GLILLTWQKLASMTGLYMISP), 148–168 (GINLNMLMTMSMLSIAIGGWG), 178–198 (IMAYSSIAHMGWMTAILIYNP), 201–221 (TLLNLVIYILMTTTMFMLFMI), 247–267 (TLLSMGGLPPLMGFLPKWMII), 276–296 (IVLPTIMAITALLNLFFYMRL), and 325–345 (LLTPMIMMSTLTLPLAPMMMI).

Belongs to the complex I subunit 2 family. In terms of assembly, core subunit of respiratory chain NADH dehydrogenase (Complex I) which is composed of 45 different subunits. Interacts with TMEM242.

Its subcellular location is the mitochondrion inner membrane. The catalysed reaction is a ubiquinone + NADH + 5 H(+)(in) = a ubiquinol + NAD(+) + 4 H(+)(out). In terms of biological role, core subunit of the mitochondrial membrane respiratory chain NADH dehydrogenase (Complex I) which catalyzes electron transfer from NADH through the respiratory chain, using ubiquinone as an electron acceptor. Essential for the catalytic activity and assembly of complex I. This Ozimops beccarii (Beccari's free-tailed bat) protein is NADH-ubiquinone oxidoreductase chain 2.